Consider the following 256-residue polypeptide: MLSRVVLSAAATAASSLKNAAFLGPGVLQATRTFHTGQPHLAPVPPLPEYGGKVRYGLIPEEFFQFLYPKTGVTGPYVLGTGLILYALSKEIYVISAETFTALSLIGVMVYGIKKYGPAVADFADKLNEQKLAQLEEAKQTSIQQIQNAIDMEKSQQALVQKRHYLFDVQRNNIAMALEVTYRERLYRVYKEVKNRLDYHIYVQNMMRQKEQEHMVNWVEKHVVQSISTQQEKETIAKCIADLKLLAKKAQAQPVM.

The transit peptide at 1 to 42 (MLSRVVLSAAATAASSLKNAAFLGPGVLQATRTFHTGQPHLA) directs the protein to the mitochondrion. K131 carries the post-translational modification N6-succinyllysine. K139, K154, K162, K221, K233, and K244 each carry N6-acetyllysine.

This sequence belongs to the eukaryotic ATPase B chain family. In terms of assembly, component of the ATP synthase complex composed at least of ATP5F1A/subunit alpha, ATP5F1B/subunit beta, ATP5MC1/subunit c (homooctomer), MT-ATP6/subunit a, MT-ATP8/subunit 8, ATP5ME/subunit e, ATP5MF/subunit f, ATP5MG/subunit g, ATP5MK/subunit k, ATP5MJ/subunit j, ATP5F1C/subunit gamma, ATP5F1D/subunit delta, ATP5F1E/subunit epsilon, ATP5PF/subunit F6, ATP5PB/subunit b, ATP5PD/subunit d, ATP5PO/subunit OSCP. ATP synthase complex consists of a soluble F(1) head domain (subunits alpha(3) and beta(3)) - the catalytic core - and a membrane F(0) domain - the membrane proton channel (subunits c, a, 8, e, f, g, k and j). These two domains are linked by a central stalk (subunits gamma, delta, and epsilon) rotating inside the F1 region and a stationary peripheral stalk (subunits F6, b, d, and OSCP).

It is found in the mitochondrion. Its subcellular location is the mitochondrion inner membrane. Subunit b, of the mitochondrial membrane ATP synthase complex (F(1)F(0) ATP synthase or Complex V) that produces ATP from ADP in the presence of a proton gradient across the membrane which is generated by electron transport complexes of the respiratory chain. ATP synthase complex consist of a soluble F(1) head domain - the catalytic core - and a membrane F(1) domain - the membrane proton channel. These two domains are linked by a central stalk rotating inside the F(1) region and a stationary peripheral stalk. During catalysis, ATP synthesis in the catalytic domain of F(1) is coupled via a rotary mechanism of the central stalk subunits to proton translocation. In vivo, can only synthesize ATP although its ATP hydrolase activity can be activated artificially in vitro. Part of the complex F(0) domain. Part of the complex F(0) domain and the peripheric stalk, which acts as a stator to hold the catalytic alpha(3)beta(3) subcomplex and subunit a/ATP6 static relative to the rotary elements. This Pongo abelii (Sumatran orangutan) protein is ATP synthase peripheral stalk subunit b, mitochondrial.